The chain runs to 339 residues: Protein RecA (339 aa).

74–81 (GPESSGKT) contacts ATP.

It belongs to the RecA family.

It is found in the cytoplasm. Functionally, can catalyze the hydrolysis of ATP in the presence of single-stranded DNA, the ATP-dependent uptake of single-stranded DNA by duplex DNA, and the ATP-dependent hybridization of homologous single-stranded DNAs. It interacts with LexA causing its activation and leading to its autocatalytic cleavage. In Phytoplasma mali (strain AT), this protein is Protein RecA.